The sequence spans 732 residues: Ribosomal RNA large subunit methyltransferase K/L (732 aa).

The 113-residue stretch at 50–162 (MAYRICLWSR…RGRLLLGLDL (113 aa)) folds into the THUMP domain. The segment at 396-424 (TERETSSEGDEPQGASGATSRPGPRNDGA) is disordered.

It belongs to the methyltransferase superfamily. RlmKL family.

The protein resides in the cytoplasm. It carries out the reaction guanosine(2445) in 23S rRNA + S-adenosyl-L-methionine = N(2)-methylguanosine(2445) in 23S rRNA + S-adenosyl-L-homocysteine + H(+). The catalysed reaction is guanosine(2069) in 23S rRNA + S-adenosyl-L-methionine = N(2)-methylguanosine(2069) in 23S rRNA + S-adenosyl-L-homocysteine + H(+). In terms of biological role, specifically methylates the guanine in position 2445 (m2G2445) and the guanine in position 2069 (m7G2069) of 23S rRNA. In Chromohalobacter salexigens (strain ATCC BAA-138 / DSM 3043 / CIP 106854 / NCIMB 13768 / 1H11), this protein is Ribosomal RNA large subunit methyltransferase K/L.